A 95-amino-acid polypeptide reads, in one-letter code: Aspartyl/glutamyl-tRNA(Asn/Gln) amidotransferase subunit C (95 aa).

Belongs to the GatC family. In terms of assembly, heterotrimer of A, B and C subunits.

It carries out the reaction L-glutamyl-tRNA(Gln) + L-glutamine + ATP + H2O = L-glutaminyl-tRNA(Gln) + L-glutamate + ADP + phosphate + H(+). The enzyme catalyses L-aspartyl-tRNA(Asn) + L-glutamine + ATP + H2O = L-asparaginyl-tRNA(Asn) + L-glutamate + ADP + phosphate + 2 H(+). In terms of biological role, allows the formation of correctly charged Asn-tRNA(Asn) or Gln-tRNA(Gln) through the transamidation of misacylated Asp-tRNA(Asn) or Glu-tRNA(Gln) in organisms which lack either or both of asparaginyl-tRNA or glutaminyl-tRNA synthetases. The reaction takes place in the presence of glutamine and ATP through an activated phospho-Asp-tRNA(Asn) or phospho-Glu-tRNA(Gln). The polypeptide is Aspartyl/glutamyl-tRNA(Asn/Gln) amidotransferase subunit C (Methylobacillus flagellatus (strain ATCC 51484 / DSM 6875 / VKM B-1610 / KT)).